The sequence spans 395 residues: NKAP-like protein (395 aa).

2 disordered regions span residues 1–77 (MSPV…RPLP) and 91–247 (CGGY…ISCK). A phosphoserine mark is found at Ser23 and Ser25. The segment covering 25-35 (SPPSALQTSRS) has biased composition (polar residues). Over residues 109-130 (DQEKEKEESYRQRRLKERERIG) the composition is skewed to basic and acidic residues. Ser149 carries the phosphoserine modification. Over residues 150-161 (DEHTPAEDEVKN) the composition is skewed to basic and acidic residues. 2 stretches are compositionally biased toward basic residues: residues 177-197 (KTSHSTKKKRKKKPSKRKHKK) and 214-238 (KKVKTKKKEKKKKHRAKQLKKKRTK).

This sequence belongs to the NKAP family. As to quaternary structure, interacts with RBPJ, CIR1 and HDAC3. In terms of tissue distribution, specific to testis (at protein level). Detected in differenting spermatogonia and early spermatocytes (at protein level).

The protein localises to the nucleus. Its function is as follows. Transcriptional repressor of Notch-mediated signaling. Required for spermatogenesis. This Mus musculus (Mouse) protein is NKAP-like protein.